A 367-amino-acid chain; its full sequence is Glutamate 5-kinase (367 aa).

Residue Lys10 coordinates ATP. Substrate contacts are provided by Ser50, Asp137, and Asn149. ATP-binding positions include 169–170 and 211–217; these read TD and TGGMSTK. In terms of domain architecture, PUA spans 275–353; the sequence is AGEITVDDGA…QQIAEILGYE (79 aa).

The protein belongs to the glutamate 5-kinase family.

The protein resides in the cytoplasm. It carries out the reaction L-glutamate + ATP = L-glutamyl 5-phosphate + ADP. It participates in amino-acid biosynthesis; L-proline biosynthesis; L-glutamate 5-semialdehyde from L-glutamate: step 1/2. Its function is as follows. Catalyzes the transfer of a phosphate group to glutamate to form L-glutamate 5-phosphate. The sequence is that of Glutamate 5-kinase from Pectobacterium atrosepticum (strain SCRI 1043 / ATCC BAA-672) (Erwinia carotovora subsp. atroseptica).